A 247-amino-acid chain; its full sequence is Ribosomal RNA large subunit methyltransferase E (247 aa).

Residues G99, W101, D123, D139, and D162 each coordinate S-adenosyl-L-methionine. The Proton acceptor role is filled by K202.

It belongs to the class I-like SAM-binding methyltransferase superfamily. RNA methyltransferase RlmE family.

It is found in the cytoplasm. The enzyme catalyses uridine(2552) in 23S rRNA + S-adenosyl-L-methionine = 2'-O-methyluridine(2552) in 23S rRNA + S-adenosyl-L-homocysteine + H(+). In terms of biological role, specifically methylates the uridine in position 2552 of 23S rRNA at the 2'-O position of the ribose in the fully assembled 50S ribosomal subunit. The polypeptide is Ribosomal RNA large subunit methyltransferase E (Anaplasma phagocytophilum (strain HZ)).